The following is a 210-amino-acid chain: Large ribosomal subunit protein uL3 (210 aa).

A disordered region spans residues 133–152 (ATHGNSLSHRVHGSTGQNQT). An N5-methylglutamine modification is found at Gln-151.

Belongs to the universal ribosomal protein uL3 family. In terms of assembly, part of the 50S ribosomal subunit. Forms a cluster with proteins L14 and L19. In terms of processing, methylated by PrmB.

One of the primary rRNA binding proteins, it binds directly near the 3'-end of the 23S rRNA, where it nucleates assembly of the 50S subunit. The polypeptide is Large ribosomal subunit protein uL3 (Francisella philomiragia subsp. philomiragia (strain ATCC 25017 / CCUG 19701 / FSC 153 / O#319-036)).